The following is a 515-amino-acid chain: Cytochrome P450 monooxygenase paxP (515 aa).

A helical membrane pass occupies residues 20–36; the sequence is SLLWKLGVFAVLVYFLL. Cys456 provides a ligand contact to heme.

Belongs to the cytochrome P450 family. The cofactor is heme.

It is found in the membrane. It functions in the pathway secondary metabolite biosynthesis. Functionally, cytochrome P450 monooxygenase; part of the ATM2 gene cluster that mediates the biosynthesis of paxilline, a mycotoxin that acts as an inhibitor of mammalian maxi-K channels. PaxG, the geranylgeranyl diphosphate (GGPP) synthase is proposed to catalyze the first step in paxilline biosynthesis. Condensation of indole-3-glycerol phosphate with GGPP by paxC then forms 3-geranylgeranylindole (3-GGI), followed by epoxidation and cyclization of this intermediate (by paxM and paxB) to form paspaline. Paspaline is subsequently converted to 13-desoxypaxilline by paxP, the latter being then converted to paxilline by paxQ. Finally paxilline can be mono- and di-prenylated by paxD. PaxP can also utilized beta-paxitriol and alpha-PC-M6 as substrates converting them to paxilline. This is Cytochrome P450 monooxygenase paxP from Penicillium paxilli.